Consider the following 121-residue polypeptide: UPF0045 protein sll0230 (121 aa).

This sequence belongs to the UPF0045 family.

This chain is UPF0045 protein sll0230, found in Synechocystis sp. (strain ATCC 27184 / PCC 6803 / Kazusa).